Reading from the N-terminus, the 648-residue chain is Macrolide export ATP-binding/permease protein MacB (648 aa).

The ABC transporter domain occupies 5–243; it reads LELKDIRRSY…AGGTEPVVNT (239 aa). 41 to 48 is a binding site for ATP; the sequence is GASGSGKS. Transmembrane regions (helical) follow at residues 273–293, 523–543, 576–596, and 600–620; these read LLTM…VVVG, LFLT…VMNI, AVLV…LIAF, and LFLP…AFLC.

Belongs to the ABC transporter superfamily. Macrolide exporter (TC 3.A.1.122) family. In terms of assembly, homodimer. Part of the tripartite efflux system MacAB-TolC, which is composed of an inner membrane transporter, MacB, a periplasmic membrane fusion protein, MacA, and an outer membrane component, TolC. The complex forms a large protein conduit and can translocate molecules across both the inner and outer membranes. Interacts with MacA.

The protein localises to the cell inner membrane. Functionally, part of the tripartite efflux system MacAB-TolC. MacB is a non-canonical ABC transporter that contains transmembrane domains (TMD), which form a pore in the inner membrane, and an ATP-binding domain (NBD), which is responsible for energy generation. Confers resistance against macrolides. This chain is Macrolide export ATP-binding/permease protein MacB, found in Shigella flexneri.